The following is a 223-amino-acid chain: Deoxyribose-phosphate aldolase (223 aa).

Catalysis depends on aspartate 91, which acts as the Proton donor/acceptor. Lysine 154 (schiff-base intermediate with acetaldehyde) is an active-site residue. Catalysis depends on lysine 183, which acts as the Proton donor/acceptor.

The protein belongs to the DeoC/FbaB aldolase family. DeoC type 1 subfamily.

It localises to the cytoplasm. It carries out the reaction 2-deoxy-D-ribose 5-phosphate = D-glyceraldehyde 3-phosphate + acetaldehyde. It participates in carbohydrate degradation; 2-deoxy-D-ribose 1-phosphate degradation; D-glyceraldehyde 3-phosphate and acetaldehyde from 2-deoxy-alpha-D-ribose 1-phosphate: step 2/2. Functionally, catalyzes a reversible aldol reaction between acetaldehyde and D-glyceraldehyde 3-phosphate to generate 2-deoxy-D-ribose 5-phosphate. In Geobacillus kaustophilus (strain HTA426), this protein is Deoxyribose-phosphate aldolase.